We begin with the raw amino-acid sequence, 2457 residues long: MTPLREPIAVIGSACRFPGGANSPHKLWELLRDPRDILREFPDDRLVLSKFYNGNANHHGSTNVRNRSYLLSEDIRAFDAPFFHINPREADGMDPAQRILLEAVYEALEAAGYTMEQMQGTHTSVFVGVMNSDWWDLQMRDTETIATHAATGTARSIVSNRISYVFDLKGVSMTIDTACSSSLVALHQAVQSLRSGESTAAIVGGANILLDPAMYIAESTLQMLSPESRSRMWDKSANGYARGEGCAAVFLKPLTRAIADGDHIECVIRETGVSSDGRTQGITMPSAAAQAALIKSTYRSAGLDPLADRCQYFECHGTGTPAGDPIEAQAIAEAFFSHSGEDAEIYVGSIKTVIGHLEGCAGLAGLLKASLAIQNRTIPANMLFNDLNPLIGPYYRNLKILQAAKPWPQDIHGPRRASVNSFGFGGTNAHVILESYEPEMQGTHVLQERSFHGPLTFSACSKSSLLATISNFTSYIKTNPAVDLQNLAWVLQRKRTEFPVKQHFSGSTHARLIESMEAYLQNAGSSGLHNTTIDTKLLYPSEIPRVLGIFTGQGAQWATMGKEFIQNSYLFRESIDRSEAALVALPDPPSWSLISELFATVETSRLNEAELSQPLCTAIQIAIVDLMFAAGVKLDAVVGHSSGEIAAAYASGIISAADAMAIAYYRGFHAKRSHGTGGKRGGMVAAELSYEAALQFCEKVEWAGRLVLAASNSPSSITLSGDLDAVQEAHAYFEKENIFSRLLRVDTAYHSHHMIPCAEPYLTSLKACNIQVSQARSDCIWISSVSGDVQSSSEEQGALTGEYWVDNMVKPVLFSQAVQCSIWNSGPFESIVEIGPHFALKGPTTQVMEAVLESSPPYLSFMRRGHGIETFSDGLGRLWSKLGPSSVDLTGYWKACSSSHIKFQMLKGLPAYAWDHDKVYWKEGRISRNHRLRKDVPHELLGRRTADDSDYELRWRNVLRLTEIPWIRGHKFQGQVLFPAAGYVTMALEASKALVGDRHVRLFELRDICIRKALVLEEDQSSLETVFSVKRLNADFGIHDENMDLLEAEFSCYVCADETVGTLEKTVSGRIIIHLGSGVDVKLPPAAHFCTDLSPVDLDRFYSTVEELGLSYQGLFKGLDHAERMLNHSHALAVWENHSMGAGSMVHPALLDVMFQAIFVASISPAAPSTLWTPYLPVSIDRIIVDPDHIPVYSHPEVRAHIQAYVTKSSASSIVGDIHLLDSNGIHNGIQVEGLSLKSVAEPTEENDRSIFSQTVWDTDIASGTDFLRDRKEDAQESKLIHAIERVALFHFRSLVEAITVEKAKTLAWHHQLFLKAVKANIETIRTGGNPVVRQEWLCDTRETIEDLRAQHPGQIDLNLMHAVSEKLISIVCGETQILEVMLQDDMLNDFYMRGRGFETMNNCIARAVQQIAHKHPRAKYLEIGAGTGGTTHRILDTIESAYTSYEYTDISSAFFEKASHKFDKHASKMVFKVLDIEKDVVDQGFENGAYDVVIAANVLHATRTLSGTMGHIRSLLKPGGYLIFMEVTGDQLRLLFLFGALPGWWLGAGEGRSLGPGVSTIAWDNILRNTGFSGVDDVFYDFPDRSRHTCSVMISQAVDDQLRLLRDPLAATGMPISEQVLIIGGDTSSVSQLAYDTKRLISPWASCVAINNIDGLDSRRLPSRFSVICLTELDKPLFSEIMSEQRLSNLQNLFATANVVFWITSGCNEGTPVANMMVGIGRALATELPHLTLQFLDVKTVERLKPSIVAQSFFRLVLAKPLVMAEKSMLWTTEPELVFDGDDILIPRVLPDKEMNNRFNAARRPISENLWKESTCIELSNADNSSAPALFEIKNTIRPGETTIDVKYSVCLGKRCTFVLGVVSGTSDTVLAISDTNASSVRISKEHVFFLPHDFSGNSATLLLDTANHVLAAKLLRCISPNSIALIYEPGVRLAAAIRHHAHENTVDVFPATSNREKCGEGWAFIHPHATERDIRTIIPRNTGCFINLSFKPPGALSRALLQQTIIHGPDCLSQIVSSADGFLLEAAFNWATTGLLSLDSVETVSVQSYVGTTRPSRDFPLVFDWTAPRLPVTVKPLEPKGLFLPDKTYLMIGMTGDLGRSLCRWMAEHGARYVVLTSRNAEVDSAWIESMAAIGATVKVYKMDVSNRKSVLGVYTTIKNSLPTIAGVCNAAMVLEDRLFANMTVGALSKVFEPKVEGSKVLDEIFHELNLDFFILFSSLTSILGNGGQSNYHAANLFMTSMCAQRRARGLAASVMHIGMVADIGYVARSDRHIENHLRKLQYHPMSETDMHYLFAEAVMSSRADHPGNWNIVSGIETFVDAPGVKLRPPHYHNPRFAHYVREENARKEDLRTDKTEKSVKELLEDAISEEDVTTVFQQAFLIKLERLTQLESHRIDANKSLLNLGVDSLSAVEIRNWFLQTVGVDIPVLKLLRGDTVSEISIDATKKYLAQRTS.

Positions 5 to 435 (REPIAVIGSA…GTNAHVILES (431 aa)) constitute a Ketosynthase family 3 (KS3) domain. Catalysis depends on for beta-ketoacyl synthase activity residues Cys179, His316, and His356. Residues 545–856 (RVLGIFTGQG…VMEAVLESSP (312 aa)) are malonyl-CoA:ACP transacylase (MAT) domain. Residue Ser641 is the For malonyltransferase activity of the active site. Residues 938–1078 (HELLGRRTAD…GRIIIHLGSG (141 aa)) are N-terminal hotdog fold. The tract at residues 938–1244 (HELLGRRTAD…LSLKSVAEPT (307 aa)) is dehydratase (DH) domain. Residues 938–1246 (HELLGRRTAD…LKSVAEPTEE (309 aa)) form the PKS/mFAS DH domain. The active-site Proton acceptor; for dehydratase activity is His970. The segment at 1091-1246 (TDLSPVDLDR…LKSVAEPTEE (156 aa)) is C-terminal hotdog fold. The active-site Proton donor; for dehydratase activity is the Asp1152. Positions 1399–1587 (ETMNNCIARA…DVFYDFPDRS (189 aa)) are methyltransferase (CMet) domain. The segment at 2085-2281 (FLPDKTYLMI…SDRHIENHLR (197 aa)) is ketoreductase (KR) domain. The Carrier domain occupies 2374 to 2451 (DVTTVFQQAF…EISIDATKKY (78 aa)). Ser2411 carries the post-translational modification O-(pantetheine 4'-phosphoryl)serine.

It depends on pantetheine 4'-phosphate as a cofactor.

It participates in mycotoxin biosynthesis. Highly reducing polyketide synthase; part of the gene clusters that mediate the biosynthesis of the host-selective toxins (HSTs) ACT-toxins responsible for brown spot of tangerine disease by the tangerine pathotype which affects tangerines and mandarins. ACT-toxins consist of three moieties, 9,10-epoxy-8-hydroxy-9-methyl-decatrienoic acid (EDA), valine and a polyketide. ACT-toxin I is toxic to both citrus and pear; toxin II the 5''-deoxy derivative of ACT-toxin I, is highly toxic to pear and slightly toxic to citrus. On cellular level, ACT-toxins affect plasma membrane of susceptible cells and cause a sudden increase in loss of K(+) after a few minutes of toxin treatment. The acyl-CoA ligase ACTT1, the hydrolase ACTT2, the enoyl-CoA hydratases ACTT3 and ACTT6, and the acyl-CoA synthetase ACTT5 are all involved in the biosynthesis of the AK-, AF- and ACT-toxin common 9,10-epoxy-8-hydroxy-9-methyl-decatrienoic acid (EDA) structural moiety. The exact role of each enzyme, and of additional enzymes identified within the AF-toxin clusters have still to be determined. On the other hand, ACTTS1 to ACTTS4 are specific to the tangerine pathotype. The function of ACTTS3 is to elongate the polyketide chain portion of ACT-toxin that is unique to this toxin. The enoyl-reductase ACTTS2 might complement the missing enoyl-reductase (ER) domain in ACTTS3 in the synthesis of the polyketide portion of ACT-toxin. The roles of the nonribosomal peptide synthetases-related proteins ACTTS1 and ACTTS4 have also still not been elucidated. In Alternaria alternata (Alternaria rot fungus), this protein is Highly reducing polyketide synthase ACTTS3.